The chain runs to 243 residues: Protein IN2-1 (243 aa).

The tract at residues 1–26 is disordered; sequence MAAAAGPSSSVKESLPPALGSTSQPP. In terms of domain architecture, GST N-terminal spans 31–112; that stretch reads GTTRLYICYF…YIDSNFDGPA (82 aa). Glutathione-binding positions include K70, V84, and 96–97; that span reads ES. Residues 109 to 240 form the GST C-terminal domain; that stretch reads DGPALLPEDA…FLLDLAKSHL (132 aa).

Belongs to the GST superfamily. HSP26 family. Leaves and roots. It is more strongly induced in the leaves relative to the roots.

This Zea mays (Maize) protein is Protein IN2-1 (IN2-1).